Reading from the N-terminus, the 664-residue chain is Chaperone protein dnaK1 (664 aa).

Residue T198 is modified to Phosphothreonine; by autocatalysis.

Belongs to the heat shock protein 70 family.

In terms of biological role, acts as a chaperone. This chain is Chaperone protein dnaK1 (dnaK1), found in Prochlorococcus marinus (strain MIT 9313).